A 124-amino-acid polypeptide reads, in one-letter code: Cholera enterotoxin subunit B (124 aa).

The N-terminal stretch at 1-21 is a signal peptide; that stretch reads MIKLKFGVFFTVLLSSAYAHG. Residues Cys-30 and Cys-107 are joined by a disulfide bond.

In terms of assembly, the holotoxin (choleragen) consists of a pentameric ring of B subunits whose central pore is occupied by the A subunit. The A subunit contains two chains, A1 and A2, linked by a disulfide bridge.

It is found in the secreted. The protein localises to the host cell membrane. Functionally, the B subunit pentameric ring directs the A subunit to its target by binding to the GM1 gangliosides present on the surface of the intestinal epithelial cells. It can bind five GM1 gangliosides. It has no toxic activity by itself. The polypeptide is Cholera enterotoxin subunit B (ctxB) (Vibrio cholerae serotype O1 (strain ATCC 39315 / El Tor Inaba N16961)).